Reading from the N-terminus, the 568-residue chain is SLAIN motif-containing protein 1 (568 aa).

Disordered regions lie at residues 1–22 (MMAEQVKCASAGVSSGAGSGPV), 59–92 (LLLLPPPPPAAPPPAGLQPLGPRSPPAATATAAA), 139–162 (GGGPEPGGAGTPPGAAAAPPSPPP), 235–256 (YTSRGSPLSPQSSIDSELSTSE), and 291–403 (STSA…LRRS). Residues 21-56 (PVVNAELEVKKLQELVRKLEKQNEQLRSRAASAAAA) are a coiled coil. Positions 62–74 (LPPPPPAAPPPAG) are enriched in pro residues. Residues 75–92 (LQPLGPRSPPAATATAAA) show a composition bias toward low complexity. Positions 139 to 149 (GGGPEPGGAGT) are enriched in gly residues. The span at 235–245 (YTSRGSPLSPQ) shows a compositional bias: polar residues. Ser-243 is modified (phosphoserine). Composition is skewed to low complexity over residues 246–255 (SSIDSELSTS) and 291–307 (STSASVSRHSSSVSLSS). Residues 316–329 (QEYDQYSLEDEEEF) are compositionally biased toward acidic residues. Residues 366–384 (SSQYFPSNNYQQQQYYSPQ) are compositionally biased toward low complexity. Over residues 385–395 (AQTPDQQPNRT) the composition is skewed to polar residues. An asymmetric dimethylarginine mark is found at Arg-471 and Arg-543.

Belongs to the SLAIN motif-containing family. As to quaternary structure, interacts with MAPRE1, MAPRE2, MAPRE3 and CKAP5. Interacts with ZDHHC17 (via ANK repeats). In terms of tissue distribution, expressed in embryonic stem cells. Expressed in brain.

Its subcellular location is the cytoplasm. The protein localises to the cytoskeleton. Microtubule plus-end tracking protein that might be involved in the regulation of cytoplasmic microtubule dynamics, microtubule organization and microtubule elongation. This is SLAIN motif-containing protein 1 (SLAIN1) from Homo sapiens (Human).